The following is a 237-amino-acid chain: Orotidine 5'-phosphate decarboxylase (237 aa).

Substrate-binding positions include D17, K39, 66–75, T121, R182, Q191, G211, and R212; that span reads DLKLHDIGNT. The Proton donor role is filled by K68.

It belongs to the OMP decarboxylase family. Type 1 subfamily. As to quaternary structure, homodimer.

It carries out the reaction orotidine 5'-phosphate + H(+) = UMP + CO2. The protein operates within pyrimidine metabolism; UMP biosynthesis via de novo pathway; UMP from orotate: step 2/2. Its function is as follows. Catalyzes the decarboxylation of orotidine 5'-monophosphate (OMP) to uridine 5'-monophosphate (UMP). The sequence is that of Orotidine 5'-phosphate decarboxylase from Rhodopseudomonas palustris (strain TIE-1).